The following is a 397-amino-acid chain: Formate-dependent phosphoribosylglycinamide formyltransferase (397 aa).

Residues E21–L22 and E81 contribute to the N(1)-(5-phospho-beta-D-ribosyl)glycinamide site. ATP-binding positions include R113, K154, E194–V197, and E202. Positions R118–I312 constitute an ATP-grasp domain. Residues E271 and E283 each coordinate Mg(2+). Residues D290, K361, and R368 to R369 contribute to the N(1)-(5-phospho-beta-D-ribosyl)glycinamide site.

This sequence belongs to the PurK/PurT family. In terms of assembly, homodimer.

The enzyme catalyses N(1)-(5-phospho-beta-D-ribosyl)glycinamide + formate + ATP = N(2)-formyl-N(1)-(5-phospho-beta-D-ribosyl)glycinamide + ADP + phosphate + H(+). It functions in the pathway purine metabolism; IMP biosynthesis via de novo pathway; N(2)-formyl-N(1)-(5-phospho-D-ribosyl)glycinamide from N(1)-(5-phospho-D-ribosyl)glycinamide (formate route): step 1/1. Its function is as follows. Involved in the de novo purine biosynthesis. Catalyzes the transfer of formate to 5-phospho-ribosyl-glycinamide (GAR), producing 5-phospho-ribosyl-N-formylglycinamide (FGAR). Formate is provided by PurU via hydrolysis of 10-formyl-tetrahydrofolate. In Saccharolobus solfataricus (strain ATCC 35092 / DSM 1617 / JCM 11322 / P2) (Sulfolobus solfataricus), this protein is Formate-dependent phosphoribosylglycinamide formyltransferase.